The following is a 347-amino-acid chain: Holliday junction branch migration complex subunit RuvB (347 aa).

Residues 4–186 form a large ATPase domain (RuvB-L) region; it reads INEYGSERIV…FGMIFEMNFY (183 aa). ATP is bound by residues leucine 25, arginine 26, glycine 67, lysine 70, threonine 71, threonine 72, 133–135, arginine 176, tyrosine 186, and arginine 223; that span reads EDF. Threonine 71 lines the Mg(2+) pocket. A small ATPAse domain (RuvB-S) region spans residues 187-257; sequence TQEELKMIIT…IVEEVMRLLG (71 aa). A head domain (RuvB-H) region spans residues 260–347; it reads EFGLDEMDRK…GLFDGFGNIE (88 aa). Residues arginine 315 and arginine 320 each contribute to the DNA site.

This sequence belongs to the RuvB family. Homohexamer. Forms an RuvA(8)-RuvB(12)-Holliday junction (HJ) complex. HJ DNA is sandwiched between 2 RuvA tetramers; dsDNA enters through RuvA and exits via RuvB. An RuvB hexamer assembles on each DNA strand where it exits the tetramer. Each RuvB hexamer is contacted by two RuvA subunits (via domain III) on 2 adjacent RuvB subunits; this complex drives branch migration. In the full resolvosome a probable DNA-RuvA(4)-RuvB(12)-RuvC(2) complex forms which resolves the HJ.

The protein resides in the cytoplasm. It carries out the reaction ATP + H2O = ADP + phosphate + H(+). Its function is as follows. The RuvA-RuvB-RuvC complex processes Holliday junction (HJ) DNA during genetic recombination and DNA repair, while the RuvA-RuvB complex plays an important role in the rescue of blocked DNA replication forks via replication fork reversal (RFR). RuvA specifically binds to HJ cruciform DNA, conferring on it an open structure. The RuvB hexamer acts as an ATP-dependent pump, pulling dsDNA into and through the RuvAB complex. RuvB forms 2 homohexamers on either side of HJ DNA bound by 1 or 2 RuvA tetramers; 4 subunits per hexamer contact DNA at a time. Coordinated motions by a converter formed by DNA-disengaged RuvB subunits stimulates ATP hydrolysis and nucleotide exchange. Immobilization of the converter enables RuvB to convert the ATP-contained energy into a lever motion, pulling 2 nucleotides of DNA out of the RuvA tetramer per ATP hydrolyzed, thus driving DNA branch migration. The RuvB motors rotate together with the DNA substrate, which together with the progressing nucleotide cycle form the mechanistic basis for DNA recombination by continuous HJ branch migration. Branch migration allows RuvC to scan DNA until it finds its consensus sequence, where it cleaves and resolves cruciform DNA. This is Holliday junction branch migration complex subunit RuvB from Fervidobacterium nodosum (strain ATCC 35602 / DSM 5306 / Rt17-B1).